The following is a 632-amino-acid chain: Phosphomethylpyrimidine synthase (632 aa).

Substrate-binding positions include Asn237, Met266, Tyr295, His331, 351 to 353 (SRG), 392 to 395 (DGLR), and Glu431. His435 serves as a coordination point for Zn(2+). Position 458 (Tyr458) interacts with substrate. His499 serves as a coordination point for Zn(2+). The [4Fe-4S] cluster site is built by Cys579, Cys582, and Cys587.

Belongs to the ThiC family. As to quaternary structure, homodimer. The cofactor is [4Fe-4S] cluster.

The enzyme catalyses 5-amino-1-(5-phospho-beta-D-ribosyl)imidazole + S-adenosyl-L-methionine = 4-amino-2-methyl-5-(phosphooxymethyl)pyrimidine + CO + 5'-deoxyadenosine + formate + L-methionine + 3 H(+). Its pathway is cofactor biosynthesis; thiamine diphosphate biosynthesis. Its function is as follows. Catalyzes the synthesis of the hydroxymethylpyrimidine phosphate (HMP-P) moiety of thiamine from aminoimidazole ribotide (AIR) in a radical S-adenosyl-L-methionine (SAM)-dependent reaction. The sequence is that of Phosphomethylpyrimidine synthase from Chromobacterium violaceum (strain ATCC 12472 / DSM 30191 / JCM 1249 / CCUG 213 / NBRC 12614 / NCIMB 9131 / NCTC 9757 / MK).